Consider the following 442-residue polypeptide: Transcription factor MYCFIDRAFT_198930 (442 aa).

A disordered region spans residues 1–34; it reads MSTTPMAAPPGADLKPVTSSRGRSSTSDEQKLRS. The zn(2)-C6 fungal-type DNA-binding region spans 36–63; it reads CESCAQSKLKCSGDKPACARCAKRGLAC. The disordered stretch occupies residues 74 to 107; it reads KPKGYTSTNDNNPSKRREDSHSPAASQWSSTGHL. Positions 96-107 are enriched in polar residues; sequence PAASQWSSTGHL.

Its subcellular location is the nucleus. Transcription factor that positively regulates the expression of the gene cluster that mediates the biosynthesis of an emodin derivative that may be involved in black Sigatoka disease of banana. This is Transcription factor MYCFIDRAFT_198930 from Pseudocercospora fijiensis (strain CIRAD86) (Black leaf streak disease fungus).